Consider the following 985-residue polypeptide: Eukaryotic translation initiation factor 4E transporter (985 aa).

Positions 1 to 24 (MDRRSMGETESGDAFLDLKKPPAS) are disordered. Position 5 is a phosphoserine (Ser5). The short motif at 30 to 36 (YTKEELL) is the YXXXXLphi motif element. Ser74, Ser78, Ser115, Ser120, Ser136, and Ser138 each carry phosphoserine. An interaction with CSDE1 region spans residues 131 to 161 (VSSRRSGSPLEKDSDGLRLLGGRRIGSGRII). The Nuclear localization signal motif lies at 195-211 (RREFGDSKRVFGERRRN). A disordered region spans residues 208–230 (RRRNDSYTEEEPEWFSAGPTSQS). Positions 219 to 240 (PEWFSAGPTSQSETIELTGFDD) are interaction with DDX6. 4 positions are modified to phosphoserine: Ser301, Ser345, Ser353, and Ser374. Lys410 participates in a covalent cross-link: Glycyl lysine isopeptide (Lys-Gly) (interchain with G-Cter in SUMO2). Position 417 is a phosphoserine (Ser417). Positions 438–447 (VEAGLKGLKV) match the Nuclear export signal motif. The segment at 448 to 490 (DQQVKNSTPFMAEHLEETLSAVTNNRQLKKDGDMTAFNKLVST) is interaction with LSM14A. The residue at position 486 (Lys486) is an N6-acetyllysine. Ser513, Ser564, and Ser587 each carry phosphoserine. The Nuclear export signal signature appears at 613–638 (ITAQMSQLELQQAALEGLALPHDLAV). Disordered stretches follow at residues 664–693 (QQRVTKSPAPVHRGNSSSPAPAASITSMLS) and 707–803 (ESKE…PTTP). The residue at position 693 (Ser693) is a Phosphoserine. The segment at 695-713 (SFTPTSVIRKMYESKEKSK) is interaction with PATL1. Basic and acidic residues-rich tracts occupy residues 707 to 717 (ESKEKSKEEPA) and 725 to 735 (DSKEDTQKASE). Positions 736-746 (ENLLSSSSVPS) are enriched in low complexity. The residue at position 752 (Ser752) is a Phosphoserine. Over residues 754-776 (TTNSKLSALQRSSCSTPLSQANR) the composition is skewed to polar residues. 2 positions are modified to phosphoserine: Ser920 and Ser951. The disordered stretch occupies residues 922 to 953 (QTTPQNVPSRSGLPHMHSQLEHRPSQRSSSPV). The tract at residues 940 to 985 (QLEHRPSQRSSSPVGLAKWFGSDVLQQPLPSMPAKVISVDELEYRQ) is interaction with LSM14A.

This sequence belongs to the 4E-T/EIF4E-T family. In terms of assembly, interacts (via YXXXXLphi motif) with EIF4E. Interacts (via YXXXXLphi motif) with EIF4E2. Interacts with DDX6. Interacts with CSDE1/UNR. Interacts with CNOT1; promoting association with the CCR4-NOT complex. Interacts with LSM14A; promoting EIF4ENIF1 localization to P-bodies. Interacts with PATL1. Interacts with importin beta only in the presence of importin alpha, suggesting a direct interaction with importin alpha. Interacts with APOBEC3G in an RNA-dependent manner. Post-translationally, phosphorylation by MAPK8/JNK1 and or MAPK9/JNK2 in response to oxidative stress promotes P-body assembly. Phosphorylated during meiotic maturation. As to expression, widely expressed.

The protein localises to the cytoplasm. The protein resides in the P-body. Its subcellular location is the nucleus. It localises to the PML body. It is found in the nucleus speckle. Its function is as follows. EIF4E-binding protein that regulates translation and stability of mRNAs in processing bodies (P-bodies). Plays a key role in P-bodies to coordinate the storage of translationally inactive mRNAs in the cytoplasm and prevent their degradation. Acts as a binding platform for multiple RNA-binding proteins: promotes deadenylation of mRNAs via its interaction with the CCR4-NOT complex, and blocks decapping via interaction with eIF4E (EIF4E and EIF4E2), thereby protecting deadenylated and repressed mRNAs from degradation. Component of a multiprotein complex that sequesters and represses translation of proneurogenic factors during neurogenesis. Promotes miRNA-mediated translational repression. Required for the formation of P-bodies. Involved in mRNA translational repression mediated by the miRNA effector TNRC6B by protecting TNRC6B-targeted mRNAs from decapping and subsequent decay. Also acts as a nucleoplasmic shuttling protein, which mediates the nuclear import of EIF4E and DDX6 by a piggy-back mechanism. This chain is Eukaryotic translation initiation factor 4E transporter, found in Homo sapiens (Human).